We begin with the raw amino-acid sequence, 195 residues long: Small ribosomal subunit protein eS1 (195 aa).

This sequence belongs to the eukaryotic ribosomal protein eS1 family.

This is Small ribosomal subunit protein eS1 from Methanothermobacter thermautotrophicus (strain ATCC 29096 / DSM 1053 / JCM 10044 / NBRC 100330 / Delta H) (Methanobacterium thermoautotrophicum).